Consider the following 483-residue polypeptide: Cytochrome P450 71A23 (483 aa).

Residues 1–21 (MILFLCLIILFIITILFFKKH) form a helical membrane-spanning segment. C429 contributes to the heme binding site.

This sequence belongs to the cytochrome P450 family. The cofactor is heme.

The protein localises to the membrane. In Arabidopsis thaliana (Mouse-ear cress), this protein is Cytochrome P450 71A23 (CYP71A23).